Here is a 288-residue protein sequence, read N- to C-terminus: Quinate/shikimate dehydrogenase (288 aa).

The substrate site is built by lysine 71 and aspartate 107. Residues 132-135 (AGGA), 155-158 (NRKD), lysine 205, 232-235 (CVYN), and glycine 255 contribute to the NAD(+) site.

Belongs to the shikimate dehydrogenase family. In terms of assembly, homodimer.

It catalyses the reaction L-quinate + NAD(+) = 3-dehydroquinate + NADH + H(+). The enzyme catalyses L-quinate + NADP(+) = 3-dehydroquinate + NADPH + H(+). It carries out the reaction shikimate + NADP(+) = 3-dehydroshikimate + NADPH + H(+). The catalysed reaction is shikimate + NAD(+) = 3-dehydroshikimate + NADH + H(+). It participates in metabolic intermediate biosynthesis; chorismate biosynthesis; chorismate from D-erythrose 4-phosphate and phosphoenolpyruvate: step 4/7. In terms of biological role, the actual biological function of YdiB remains unclear, nor is it known whether 3-dehydroshikimate or quinate represents the natural substrate. Catalyzes the reversible NAD-dependent reduction of both 3-dehydroshikimate (DHSA) and 3-dehydroquinate to yield shikimate (SA) and quinate, respectively. It can use both NAD or NADP for catalysis, however it has higher catalytic efficiency with NAD. This Salmonella agona (strain SL483) protein is Quinate/shikimate dehydrogenase.